The chain runs to 307 residues: Ribonuclease Z (307 aa).

Residues histidine 63, histidine 65, aspartate 67, histidine 68, histidine 143, aspartate 213, and histidine 271 each contribute to the Zn(2+) site. Residue aspartate 67 is the Proton acceptor of the active site.

It belongs to the RNase Z family. Homodimer. Zn(2+) serves as cofactor.

It catalyses the reaction Endonucleolytic cleavage of RNA, removing extra 3' nucleotides from tRNA precursor, generating 3' termini of tRNAs. A 3'-hydroxy group is left at the tRNA terminus and a 5'-phosphoryl group is left at the trailer molecule.. Functionally, zinc phosphodiesterase, which displays some tRNA 3'-processing endonuclease activity. Probably involved in tRNA maturation, by removing a 3'-trailer from precursor tRNA. The polypeptide is Ribonuclease Z (Lactococcus lactis subsp. cremoris (strain SK11)).